The primary structure comprises 136 residues: Large ribosomal subunit protein eL27 (136 aa).

The 36-residue stretch at Met-5 to His-40 folds into the KOW domain. N6-acetyllysine is present on residues Lys-27 and Lys-93.

Belongs to the eukaryotic ribosomal protein eL27 family. As to quaternary structure, component of the large ribosomal subunit. Interacts with RRP1B. Component of the large ribosomal subunit. Interacts with RRP1B. Interacts with DHX33.

It localises to the cytoplasm. The protein resides in the cytosol. It is found in the rough endoplasmic reticulum. Component of the large ribosomal subunit. Required for proper rRNA processing and maturation of 28S and 5.8S rRNAs. This Bos taurus (Bovine) protein is Large ribosomal subunit protein eL27 (RPL27).